Reading from the N-terminus, the 457-residue chain is MDITYDDLPVEIWIRILKFMKDSAVNLVLVNTDFFKLIYFKKNKFYELKEFNFGMQKNYVKQRITLINYVVEKGYLDIIVYINNLKSNHNPLIIDNIKILGSISKDTALWYSCKNNNLATTKYFINKGASINSSSLPLKTACIEGHLDTVKYLFSCGIEIINSIYDCIVSACCYGRLNIVIYLSNKISIPGDYINEAFVMACKYGYLDIAKYLFNLDCSITVDALYGACINGHIEVVEYLIGLGVDPRKEKCWAITSACQGGHLNIIEFLLSLGIKPKEINVDAFYHACKTGNLEIAKYLKEIGADTITRRDWALELSARGGYLDVVKYIIELGVSQKSLNKALIDATLFCRVEVVEYLVDSGSDFRQNDDYLFRSIICTRDYVEMAEYFIMKGVNIIVNNNEPIKTVCHNGCIGILKLLIMYGVDYNPIKDQLINIAKSNNQSAIIKYLEDLDTLK.

11 ANK repeats span residues 62-91, 104-132, 133-162, 193-219, 220-249, 251-279, 281-309, 310-339, 341-368, 400-429, and 431-457; these read QRITLINYVVEKGYLDIIVYINNLKSNHNP, SKDTALWYSCKNNNLATTKYFINKGASIN, SSSLPLKTACIEGHLDTVKYLFSCGIEIIN, YINEAFVMACKYGYLDIAKYLFNLDCS, ITVDALYGACINGHIEVVEYLIGLGVDPRK, KCWAITSACQGGHLNIIEFLLSLGIKPKE, NVDAFYHACKTGNLEIAKYLKEIGADTIT, RRDWALELSARGGYLDVVKYIIELGVSQKS, NKALIDATLFCRVEVVEYLVDSGSDFRQ, NNNEPIKTVCHNGCIGILKLLIMYGVDYNP, and KDQLINIAKSNNQSAIIKYLEDLDTLK.

This Acanthamoeba polyphaga mimivirus (APMV) protein is Putative ankyrin repeat protein L112.